The following is a 307-amino-acid chain: Serine/threonine-protein phosphatase 4 catalytic subunit B (307 aa).

Positions 54, 56, 82, and 114 each coordinate Mn(2+). The Proton donor role is filled by H115. Residues H164 and H238 each coordinate Mn(2+). L307 is modified (leucine methyl ester).

Belongs to the PPP phosphatase family. PP-4 (PP-X) subfamily. As to quaternary structure, serine/threonine-protein phosphatase 4 (PP4) occurs in different assemblies of the catalytic and one or more regulatory subunits. Mn(2+) serves as cofactor.

The protein localises to the cytoplasm. It localises to the cytoskeleton. It is found in the microtubule organizing center. The protein resides in the centrosome. It catalyses the reaction O-phospho-L-seryl-[protein] + H2O = L-seryl-[protein] + phosphate. The catalysed reaction is O-phospho-L-threonyl-[protein] + H2O = L-threonyl-[protein] + phosphate. Functionally, protein phosphatase that regulates many processes such as microtubule organization at centrosomes. The sequence is that of Serine/threonine-protein phosphatase 4 catalytic subunit B (ppp4cb) from Danio rerio (Zebrafish).